The following is a 2603-amino-acid chain: Protein SABRE (2603 aa).

The signal sequence occupies residues 1 to 35 (MAASPAKFFFGFLIVSIVLWMIFMLFAWMLSRVLG). N-linked (GlcNAc...) asparagine glycosylation occurs at N196. Positions 259-287 (FPKSKQSSASLRSDEVRTSATAASSAKKP) are disordered. 10 N-linked (GlcNAc...) asparagine glycosylation sites follow: N331, N486, N597, N807, N867, N887, N1154, N1249, N1280, and N1408. The interval 786–814 (PESGCNKGISSVKDGGPSEKINQSNSVNK) is disordered. Residues 1416-1436 (FHQSPSSTEHPTDVGTVYSSQ) are disordered. Residues N1492 and N1659 are each glycosylated (N-linked (GlcNAc...) asparagine). Disordered stretches follow at residues 1656-1676 (EFENGSESDEHIRSDPSDDDG) and 1717-1777 (EPPK…DDIG). Basic and acidic residues predominate over residues 1731–1748 (KIHEENQKESCPETHQGE). Over residues 1749 to 1766 (MSRSSASPGRNLPSSPSH) the composition is skewed to polar residues. Positions 1995–2023 (VEEVELAKINLEEKERERKLLLDDIRKLS) form a coiled coil. The N-linked (GlcNAc...) asparagine glycan is linked to N2333. Disordered stretches follow at residues 2339–2380 (EQQE…RPRK), 2448–2479 (GKKFKDKSHNNRESTDNDLNLSDNDQTGKPDQ), and 2554–2603 (IRRH…DFRE). The segment covering 2343-2380 (DFSKQKVKEIKPVKSGRSSHEEKKAGKSHEEKKSRPRK) has biased composition (basic and acidic residues). Residue N2467 is glycosylated (N-linked (GlcNAc...) asparagine). Over residues 2554–2565 (IRRHTKKFRPRS) the composition is skewed to basic residues. Over residues 2566–2583 (QRGSTSQQRESLPSSPIE) the composition is skewed to polar residues. A compositionally biased stretch (low complexity) spans 2586 to 2603 (PFESGYSSGSSPYEDFRE).

Belongs to the SABRE family. As to expression, highest levels in leaves, also expressed in leaves, flowers, and siliques, and, to a lower extent, in roots and stems.

It localises to the secreted. It is found in the golgi apparatus. Its function is as follows. May be involved in membrane trafficking. Required for cell expansion, especially in root cortex, probably by counteracting the action of ethylene in promoting cells radial expansion. Involved in female organ development. Antagonistically interacts with ethylene signaling to regulate plant responses to Pi starvation. The protein is Protein SABRE of Arabidopsis thaliana (Mouse-ear cress).